Consider the following 194-residue polypeptide: Anaphase-promoting complex subunit CDC26 (194 aa).

The segment at 47 to 194 (EPMDQSEPPR…PSSNTRSHRH (148 aa)) is disordered. Composition is skewed to polar residues over residues 79-94 (GECTRTSIAPTLTSAR) and 102-112 (LTLSTPVNPVS). Low complexity-rich tracts occupy residues 154–166 (DESPTPSDSPESP) and 174–194 (TPGNPTSTSGGPSSNTRSHRH).

Belongs to the CDC26 family. In terms of assembly, the APC/C complex is probably composed of at least 12 subunits: apc-2, apc-10, apc-11, cdc-26, emb-1, emb-27, emb-30, mat-1, mat-2, mat-3, such-1 and gfi-3.

Its subcellular location is the nucleus. The protein operates within protein modification; protein ubiquitination. Its function is as follows. Probable component of the anaphase promoting complex/cyclosome (APC/C), a cell cycle-regulated E3 ubiquitin ligase that controls progression through mitosis and the G1 phase of the cell cycle. The APC/C complex acts by mediating ubiquitination and subsequent degradation of target proteins. Developmental role in early embryogenesis and the metaphase to anaphase transition in meiosis and mitosis. Required for embryonic anterior-posterior axis formation. This is Anaphase-promoting complex subunit CDC26 from Caenorhabditis elegans.